Consider the following 252-residue polypeptide: Aspartate/glutamate leucyltransferase (252 aa).

It belongs to the R-transferase family. Bpt subfamily.

The protein resides in the cytoplasm. The enzyme catalyses N-terminal L-glutamyl-[protein] + L-leucyl-tRNA(Leu) = N-terminal L-leucyl-L-glutamyl-[protein] + tRNA(Leu) + H(+). The catalysed reaction is N-terminal L-aspartyl-[protein] + L-leucyl-tRNA(Leu) = N-terminal L-leucyl-L-aspartyl-[protein] + tRNA(Leu) + H(+). In terms of biological role, functions in the N-end rule pathway of protein degradation where it conjugates Leu from its aminoacyl-tRNA to the N-termini of proteins containing an N-terminal aspartate or glutamate. This chain is Aspartate/glutamate leucyltransferase, found in Xanthomonas campestris pv. campestris (strain B100).